A 258-amino-acid polypeptide reads, in one-letter code: MLIVVSPAKTLDYESPLATEKFTQPELIEYSKELIDVCRKLTPADVASLMKVSDKIADLNVGRFQEWSETFTTENSRQAILAFKGDVYTGLEAETLSDADFEYAQKHLRMLSGLYGLLKPLDLMQPYRLEMGTKLANDKGSNLYQFWGNVITDKLNEAIAEQGDNVLINLASNEYFKAVKPKNLDAQVITPIFKDCKNGQYKVISFYAKKARGMMARYIIENRIESVADLTKFDTAGYYFVEEESTPTDLVFKREEQN.

The protein belongs to the UPF0246 family.

In Vibrio parahaemolyticus serotype O3:K6 (strain RIMD 2210633), this protein is UPF0246 protein VP0504.